Here is an 88-residue protein sequence, read N- to C-terminus: Large ribosomal subunit protein bL27 (88 aa).

The disordered stretch occupies residues 1-21; it reads MAHKKGASSSRNGRDSNAQRL. The segment covering 7–19 has biased composition (polar residues); it reads ASSSRNGRDSNAQ.

The protein belongs to the bacterial ribosomal protein bL27 family.

This is Large ribosomal subunit protein bL27 from Frankia casuarinae (strain DSM 45818 / CECT 9043 / HFP020203 / CcI3).